The following is a 765-amino-acid chain: Putative U-box domain-containing protein 50 (765 aa).

Residues 198-391 are a coiled coil; that stretch reads QEIENYFQQL…NRRIEFCKER (194 aa). One can recognise a Protein kinase domain in the interval 422–765; the sequence is SDRLRLKSGG…HSKRAAQASS (344 aa). Residues 428 to 436 and Lys449 each bind ATP; that span reads KSGGNWTNV. Residues 688-762 enclose the U-box domain; it reads DIPSVFMCPI…QDWHSKRAAQ (75 aa).

Belongs to the protein kinase superfamily. Ser/Thr protein kinase family.

The enzyme catalyses S-ubiquitinyl-[E2 ubiquitin-conjugating enzyme]-L-cysteine + [acceptor protein]-L-lysine = [E2 ubiquitin-conjugating enzyme]-L-cysteine + N(6)-ubiquitinyl-[acceptor protein]-L-lysine.. It functions in the pathway protein modification; protein ubiquitination. Its function is as follows. Functions as an E3 ubiquitin ligase. This chain is Putative U-box domain-containing protein 50 (PUB50), found in Arabidopsis thaliana (Mouse-ear cress).